The chain runs to 99 residues: Putative type 4B encapsulin shell protein PF1875 (99 aa).

The protein belongs to the encapsulin family. Family 4B subfamily. May self-assemble into facets and potentially into larger complexes.

Its subcellular location is the encapsulin nanocompartment. Its function is as follows. May be the encapsulin shell protein in a type 4 A-domain encapsulin nanocompartment system. Its cargo may be upstream glyceraldehyde-3-phosphate dehydrogenase (AC P61879). The polypeptide is Putative type 4B encapsulin shell protein PF1875 (Pyrococcus furiosus (strain ATCC 43587 / DSM 3638 / JCM 8422 / Vc1)).